The chain runs to 436 residues: Enolase (436 aa).

(2R)-2-phosphoglycerate is bound at residue glutamine 167. Glutamate 209 acts as the Proton donor in catalysis. The Mg(2+) site is built by aspartate 246, glutamate 291, and aspartate 318. (2R)-2-phosphoglycerate is bound by residues lysine 343, arginine 372, serine 373, and lysine 394. The Proton acceptor role is filled by lysine 343.

It belongs to the enolase family. Component of the RNA degradosome, a multiprotein complex involved in RNA processing and mRNA degradation. Requires Mg(2+) as cofactor.

It is found in the cytoplasm. The protein resides in the secreted. It localises to the cell surface. It catalyses the reaction (2R)-2-phosphoglycerate = phosphoenolpyruvate + H2O. It participates in carbohydrate degradation; glycolysis; pyruvate from D-glyceraldehyde 3-phosphate: step 4/5. Its function is as follows. Catalyzes the reversible conversion of 2-phosphoglycerate (2-PG) into phosphoenolpyruvate (PEP). It is essential for the degradation of carbohydrates via glycolysis. This Glaesserella parasuis serovar 5 (strain SH0165) (Haemophilus parasuis) protein is Enolase.